The following is an 864-amino-acid chain: Disintegrin and metalloproteinase domain-containing protein 15 (864 aa).

The N-terminal stretch at 1-17 (MRLALLWALGLLGAGSP) is a signal peptide. Residues 17–49 (PRPSPPLPNIGGTEEEQQASPERTQSRSLENQV) form a disordered region. Positions 18 to 208 (RPSPPLPNIG…EQHHLRRLKR (191 aa)) are excised as a propeptide. The segment covering 34–49 (QASPERTQSRSLENQV) has biased composition (polar residues). N-linked (GlcNAc...) asparagine glycosylation is present at Asn57. The Cysteine switch signature appears at 178–185 (HTCAPSWH). Position 180 (Cys180) interacts with Zn(2+). At 209-698 (DVVTETKIVE…QLRATSSLTT (490 aa)) the chain is on the extracellular side. One can recognise a Peptidase M12B domain in the interval 215–416 (KIVELVIVAD…GMGSCLFEWP (202 aa)). Asn239 is a glycosylation site (N-linked (GlcNAc...) asparagine). 4 disulfides stabilise this stretch: Cys325–Cys411, Cys367–Cys395, Cys369–Cys378, and Cys482–Cys502. His350 lines the Zn(2+) pocket. Residue Glu351 is part of the active site. The Zn(2+) site is built by His354 and His360. N-linked (GlcNAc...) asparagine glycosylation is found at Asn391 and Asn394. In terms of domain architecture, Disintegrin spans 423–510 (SSLCGNMFVD…QCPPDIRLGD (88 aa)). 2 N-linked (GlcNAc...) asparagine glycosylation sites follow: Asn608 and Asn613. 3 disulfides stabilise this stretch: Cys659–Cys669, Cys663–Cys675, and Cys677–Cys686. In terms of domain architecture, EGF-like spans 659–687 (CRSKCHGHGVCDSSRHCHCDEGWAPPDCM). A helical transmembrane segment spans residues 699-719 (GLLLSLLLLLVLVLLGASYWY). Residues Tyr717 and Tyr737 each carry the phosphotyrosine; by HCK and LCK modification. Residues 720–864 (RARLHQRLCQ…PPPAASSLYL (145 aa)) lie on the Cytoplasmic side of the membrane. Residues 738-864 (RAAQSGPPER…PPPAASSLYL (127 aa)) are disordered. A compositionally biased stretch (polar residues) spans 753-765 (RAQQMPGTKQANV). 2 stretches are compositionally biased toward pro residues: residues 768–780 (PVPP…PNPV) and 810–825 (PQGP…PLPA). The SH3-binding signature appears at 816-822 (PPPPRKP). Low complexity predominate over residues 826–850 (NPQGRPPLGDLPGPGDGSLQLVVPS). The SH3-binding signature appears at 851–857 (RPAPPPP).

Interacts with ITAGV-ITGB3 (vitronectin receptor). Interacts with SH3GL2 and SNX9; this interaction occurs preferentially with ADAM15 precursor, rather than the processed form, suggesting it occurs in a secretory pathway compartment prior to the medial Golgi. Interacts with ITAG9-ITGB1. Interacts specifically with Src family protein-tyrosine kinases (PTKs). Interacts with SH3PXD2A. Interacts with ITAGV-ITGB1. Interacts with GRB2, HCK, ITSN1, ITSN2, LYN, MAPK1, MAPK3, NCF1, NCK1, nephrocystin, PTK6, SNX33, LCK and SRC. Requires Zn(2+) as cofactor. Post-translationally, the precursor is cleaved by a furin endopeptidase. Phosphorylation increases association with PTKs. In terms of tissue distribution, predominantly expressed in brain, spinal cord, sciatic nerve and lung. Expressed at lower levels in all other tissues. In the peripheral nervous system, expressed predominantly by Schwann cells. In the central nervous system, preferentially expressed by neuronal cells.

Its subcellular location is the endomembrane system. It localises to the cell junction. The protein resides in the adherens junction. The protein localises to the cell projection. It is found in the cilium. Its subcellular location is the flagellum. It localises to the cytoplasmic vesicle. The protein resides in the secretory vesicle. The protein localises to the acrosome. Active metalloproteinase with gelatinolytic and collagenolytic activity. Plays a role in the wound healing process. Mediates both heterotypic intraepithelial cell/T-cell interactions and homotypic T-cell aggregation. Inhibits beta-1 integrin-mediated cell adhesion and migration of airway smooth muscle cells. Suppresses cell motility on or towards fibronectin possibly by driving alpha-v/beta-1 integrin (ITAGV-ITGB1) cell surface expression via ERK1/2 inactivation. Cleaves E-cadherin in response to growth factor deprivation. Plays a role in glomerular cell migration. Plays a role in pathological neovascularization. May play a role in cartilage remodeling. May be proteolytically processed, during sperm epididymal maturation and the acrosome reaction. May play a role in sperm-egg binding through its disintegrin domain. The chain is Disintegrin and metalloproteinase domain-containing protein 15 (Adam15) from Rattus norvegicus (Rat).